Here is a 601-residue protein sequence, read N- to C-terminus: Protein FREE1 (601 aa).

A disordered region spans residues 1-240 (MQQGDYNSYY…SGEYPAFEDS (240 aa)). Residues 21–35 (TPNPNPNPNPSPPAP) are compositionally biased toward pro residues. Polar residues-rich tracts occupy residues 63-79 (DYSN…QNSE) and 125-155 (LSSY…QHQT). The span at 161–175 (APPPSSAPAPNPNPA) shows a compositional bias: pro residues. Residues 176 to 197 (PYSSSLYSAPPYSSGGSSIPPS) are compositionally biased toward low complexity. Over residues 214–231 (NRSRSDLGSDLYGKRSDS) the composition is skewed to basic and acidic residues. Ser-218 carries the phosphoserine modification. The interval 338 to 344 (LDGLRML) is nuclear export signal. The FYVE-type zinc-finger motif lies at 455 to 515 (DEAVSKCTSC…VCDRCMAEVS (61 aa)). Positions 461, 464, 477, 480, 485, 488, 507, and 510 each coordinate Zn(2+). A coiled-coil region spans residues 527–552 (RNVSLQSHEDLARKLQEEMERNRKSS). Phosphoserine occurs at positions 530 and 533. Residues 542 to 561 (QEEMERNRKSSSGLREGSGR) form a disordered region.

Part of the ESCRT-I complex. Interacts with VPS23A and VPS23B, but not with VPS28 or VPS37. Interacts with IRT1. Interacts with SH3P2. Interacts with SH3P3, but not with SH3P1. Interacts (via N-terminus) with PYL4 and PYR3. Interacts (via C-terminus) with SNRK2D/SNRK2.2, SNRK2I/SNRK2.3, ABF4 and ABI5. Interacts with SINAT1, SINAT2, SINAT3 and SINAT4. Interacts with SINAT5. Component of a phosphoinositide 3-kinase (PI3K) complex containing ATG6, SH3P2 and FREE1. In terms of processing, phosphorylated at Ser-530 and Ser-533 by SNRK2D/SNRK2.2 and SNRK2I/SNRK2.3 in response to abscisic acid (ABA). Phosphorylation is necessary for ABA-induced FREE1 nuclear import. Post-translationally, ubiquitinated by SINAT1, SINAT2, SINAT3 and SINAT4 for subsequent proteasomal degradation. Ubiquitous. Lowest expression in mature seeds.

It is found in the cytoplasm. The protein localises to the prevacuolar compartment membrane. Its subcellular location is the late endosome. The protein resides in the endosome. It localises to the multivesicular body. It is found in the nucleus. Endosomal sorting complex required for transport (ESCRT) component regulating multivesicular body (MVB) protein sorting and plant growth. Required for the formation of intra-luminal vesicles (ILVs)in MVBs. Binds to phosphatidylinositol-3-phosphate (PI3P) and ubiquitin. Controls IRT1 recycling to the plasma membrane and impacts the polar delivery of this transporter to the outer plasma membrane domain. Regulates ubiquitin-dependent membrane protein degradation, vacuolar transport, autophagy, and vacuole biogenesis. ESCRT component that binds ubiquitin and regulates vacuolar sorting of proteins. Attenuates abscisic acid (ABA) signaling through RSL1-triggered degradation of the ABA receptors PYR1 and PYL4. Interacts with PYL4 and PYR1, and delivers the ubiquitinated ABA receptors as cargo to the vacuolar degradation pathway. In response to ABA, is phosphorylated by SnRK2 kinases which mediate FREE1 nuclear import. In the nucleus, interacts with the ABA-responsive transcription factors ABF4 and ABI5 to reduce their ability to bind to their cis-regulatory sequences of downstream genes, thus leading to transcriptional inhibition of ABA signaling pathway. Negatively regulates salt stress tolerance via a negative feedback loop involving ABA signaling pathway. The chain is Protein FREE1 from Arabidopsis thaliana (Mouse-ear cress).